Consider the following 1185-residue polypeptide: Adhesion G-protein coupled receptor G6 (1185 aa).

The first 32 residues, 1–32 (MISFISGRWWRWKFQNTLAVFLLLICLSTSVA), serve as a signal peptide directing secretion. Residues 33–849 (QSCQSSTSCN…AELIDEKNNR (817 aa)) lie on the Extracellular side of the membrane. A disulfide bridge links cysteine 41 with cysteine 67. One can recognise a CUB domain in the interval 41-149 (CNVVLTDSQG…KGFHISYKQV (109 aa)). The segment at 41-354 (CNVVLTDSQG…SSTQTDSTLS (314 aa)) is mediates interaction with type IV collagen. An inhibits receptor signaling in absence of type IV collagen region spans residues 41 to 839 (CNVVLTDSQG…FGILMDVSRA (799 aa)). The N-linked (GlcNAc...) asparagine glycan is linked to asparagine 68. Glutamate 89 and aspartate 97 together coordinate Ca(2+). A disulfide bridge connects residues cysteine 94 and cysteine 111. N-linked (GlcNAc...) asparagine glycosylation is present at asparagine 121. Positions 134, 136, and 137 each coordinate Ca(2+). A Pentraxin (PTX) domain is found at 154 to 355 (RNQKVTMPKS…STQTDSTLSC (202 aa)). 3 cysteine pairs are disulfide-bonded: cysteine 185–cysteine 248, cysteine 229–cysteine 271, and cysteine 369–cysteine 375. 14 N-linked (GlcNAc...) asparagine glycosylation sites follow: asparagine 395, asparagine 429, asparagine 470, asparagine 539, asparagine 550, asparagine 562, asparagine 565, asparagine 613, asparagine 680, asparagine 691, asparagine 719, asparagine 763, asparagine 799, and asparagine 818. 2 disulfides stabilise this stretch: cysteine 508–cysteine 544 and cysteine 532–cysteine 563. A GAIN-B domain is found at 658–840 (PSLTISSKNL…GILMDVSRAA (183 aa)). Intrachain disulfides connect cysteine 790/cysteine 822 and cysteine 809/cysteine 824. A GPS region spans residues 790–840 (CVFWDFNLQNYSGGCNSDGCKVGSDSNSNRTVCLCNHLTHFGILMDVSRAA). The stachel stretch occupies residues 829 to 837 (HFGILMDVS). The chain crosses the membrane as a helical span at residues 850 to 870 (VLTFITYIGCGISAIFSAATL). The Cytoplasmic segment spans residues 871–886 (LTYIAFEKLRRDYPSK). Residues 887 to 907 (ILMNLSTSLLFLNMVFLLDGW) form a helical membrane-spanning segment. Topologically, residues 908 to 915 (LASYEIKE) are extracellular. Residues 916-936 (LCVTVAVFLHFFLLTSFTWMG) traverse the membrane as a helical segment. The Cytoplasmic portion of the chain corresponds to 937-957 (LESIHMYIALVKVFNTYIRRY). The helical transmembrane segment at 958 to 978 (ILKFCIVGWGVPAAIVGIVLA) threads the bilayer. Over 979 to 1013 (VSKDSYGKNYYGKGKDGQGTSEFCWILNPVVFYVT) the chain is Extracellular. A helical membrane pass occupies residues 1014–1034 (CVAYFSIIFLMNVAMFIVVMI). Topologically, residues 1035–1057 (QICGRNGKRSNRTLREDILRNLR) are cytoplasmic. A helical membrane pass occupies residues 1058-1080 (SVVSLTFLLGMTWGFAFFAWGPV). Over 1081 to 1083 (SLA) the chain is Extracellular. Residues 1084–1106 (FMYLFTIFNSLQGLFIFVFHCAL) traverse the membrane as a helical segment. Asparagine 1092 is a 17alpha-hydroxyprogesterone binding site. Over 1107-1185 (KENVQKQWRR…RHSNADSTLQ (79 aa)) the chain is Cytoplasmic. The segment at 1138–1160 (NTKKVSSDNLGKSLSSSSFGSTT) is disordered. Low complexity predominate over residues 1144–1158 (SDNLGKSLSSSSFGS).

It belongs to the G-protein coupled receptor 2 family. Adhesion G-protein coupled receptor (ADGR) subfamily. In terms of processing, autoproteolytically processed at the GPS region of the GAIN-B domain; this cleavage modulates receptor activity. Expressed in Schwann cells of the posterior lateral line nerve and in brain.

Its subcellular location is the cell membrane. Its activity is regulated as follows. Forms a heterodimer of 2 chains generated by proteolytic processing that remain associated through non-covalent interactions mediated by the GAIN-B domain. In the inactivated receptor, the Stachel sequence (also named stalk) is embedded in the GAIN-B domain, where it adopts a beta-strand conformation. On activation, the Stachel moves into the 7 transmembrane region and adopts a twisted hook-shaped configuration that forms contacts within the receptor, leading to coupling of a G-alpha protein, which activates signaling. The cleaved GAIN-B and N-terminal domains can then dissociate from the rest of the receptor. In terms of biological role, adhesion G-protein coupled receptor (aGPCR) for steroid hormones, such as progesterone and 17alpha-hydroxyprogesterone (17OHP). Ligand binding causes a conformation change that triggers signaling via guanine nucleotide-binding proteins (G proteins) and modulates the activity of downstream effectors, such as adenylate cyclase. Adgrg6 is coupled to G(i) G alpha proteins and mediates inhibition of adenylate cyclase. Also able to couple to G(q) G proteins. Involved in myelination of the peripheral nervous system: required for differentiation of promyelinating Schwann cells and for normal myelination of axons. G-protein coupled receptor activity can also be activated by type IV collagen, a major constituent of the basement membrane. Also plays a role inner ear development. In Danio rerio (Zebrafish), this protein is Adhesion G-protein coupled receptor G6 (adgrg6).